Here is a 302-residue protein sequence, read N- to C-terminus: uncharacterized protein (302 aa).

The first 22 residues, 1–22 (MLVVFKRLGFIVSIFSLTFLSA), serve as a signal peptide directing secretion. Cys23 is lipidated: N-palmitoyl cysteine. Cys23 carries S-diacylglycerol cysteine lipidation.

Belongs to the MG067/MG068/MG395 family.

The protein localises to the cell membrane. This is an uncharacterized protein from Mycoplasma pneumoniae (strain ATCC 29342 / M129 / Subtype 1) (Mycoplasmoides pneumoniae).